A 742-amino-acid polypeptide reads, in one-letter code: ATP-dependent RNA helicase DBP7 (742 aa).

A disordered region spans residues 45–100; that stretch reads GKTVSRKRKANTTGDEGIIPGRGENSIKKLHKESSYSSEEQEKYKGRNAHNTQGRT. Positions 143–172 match the Q motif motif; the sequence is DQFASLGVSSLLVSHLEQKMRIKKPTSIQK. The Helicase ATP-binding domain maps to 178-372; the sequence is IIGNAGKNDF…NVALKDYKLI (195 aa). 191–198 provides a ligand contact to ATP; it reads AQTGSGKT. The DEGD box signature appears at 307-310; that stretch reads DEGD. Residues 405-605 form the Helicase C-terminal domain; that stretch reads TLAATLNNIT…ILMPAFKDVN (201 aa). A disordered region spans residues 701-726; it reads AMGLQSSKDGNSEKKPTKENSKNKMF. Residues 710–722 are compositionally biased toward basic and acidic residues; sequence GNSEKKPTKENSK.

It belongs to the DEAD box helicase family. DDX31/DBP7 subfamily.

It localises to the nucleus. Its subcellular location is the nucleolus. It carries out the reaction ATP + H2O = ADP + phosphate + H(+). Its function is as follows. ATP-binding RNA helicase involved in the biogenesis of 60S ribosomal subunits and is required for the normal formation of 25S and 5.8S rRNAs. The polypeptide is ATP-dependent RNA helicase DBP7 (DBP7) (Saccharomyces cerevisiae (strain ATCC 204508 / S288c) (Baker's yeast)).